The sequence spans 216 residues: Large ribosomal subunit protein uL1A (216 aa).

2 positions are modified to phosphoserine: serine 85 and serine 128.

Belongs to the universal ribosomal protein uL1 family. As to quaternary structure, component of the large ribosomal subunit (LSU). Mature yeast ribosomes consist of a small (40S) and a large (60S) subunit. The 40S small subunit contains 1 molecule of ribosomal RNA (18S rRNA) and at least 33 different proteins. The large 60S subunit contains 3 rRNA molecules (25S, 5.8S and 5S rRNA) and at least 46 different proteins. uL1 forms part of the L1 stalk.

The protein localises to the cytoplasm. Its function is as follows. Component of the ribosome, a large ribonucleoprotein complex responsible for the synthesis of proteins in the cell. The small ribosomal subunit (SSU) binds messenger RNAs (mRNAs) and translates the encoded message by selecting cognate aminoacyl-transfer RNA (tRNA) molecules. The large subunit (LSU) contains the ribosomal catalytic site termed the peptidyl transferase center (PTC), which catalyzes the formation of peptide bonds, thereby polymerizing the amino acids delivered by tRNAs into a polypeptide chain. The nascent polypeptides leave the ribosome through a tunnel in the LSU and interact with protein factors that function in enzymatic processing, targeting, and the membrane insertion of nascent chains at the exit of the ribosomal tunnel. uL1 forms part of the L1 stalk, a mobile element that plays a role in evacuating the exit-site tRNA. The sequence is that of Large ribosomal subunit protein uL1A (rpl102) from Schizosaccharomyces pombe (strain 972 / ATCC 24843) (Fission yeast).